A 440-amino-acid chain; its full sequence is Frizzled/smoothened-like sans CRD protein D (440 aa).

Residues 1–27 form the signal peptide; the sequence is MFIILKFLISFFLICNFFNYNDHFASG. Residues 28–85 are Extracellular-facing; it reads QTLPPGFCPSPLIYRNSTNRQNDIENGYLFIGQTNCTSPCPSLIFSENEWHRVYNMSL. Residues N43, N62, and N82 are each glycosylated (N-linked (GlcNAc...) asparagine). A helical transmembrane segment spans residues 86–106; that stretch reads IAGTISMFALIFLIITYSPLV. Over 107–110 the chain is Cytoplasmic; sequence NKYN. A helical membrane pass occupies residues 111 to 131; it reads GYTRHTVGILFLFCGIFLTVT. Over 132–162 the chain is Extracellular; the sequence is TDGRQLWDIDLGFEKYCPEPGRFARQSDTKC. A helical membrane pass occupies residues 163 to 183; that stretch reads LVTAIFFQYGCVTSILWWAAI. The Cytoplasmic segment spans residues 184–200; the sequence is SVDLWMTIRKVKISKLQ. A helical membrane pass occupies residues 201 to 221; the sequence is FITYAVILNIITLILTFAPIA. Topologically, residues 222–244 are extracellular; sequence SKQYGYGEAAIGCWLMDLKYQVG. A helical transmembrane segment spans residues 245–265; it reads YFWAPVGFCLCVGCVSIVLII. Topologically, residues 266–285 are cytoplasmic; it reads REIYKVSDAIKKKLLAKHLK. Residues 286 to 306 traverse the membrane as a helical segment; sequence PLMLIILMLSEFIYMFIFYSY. Residues 307–346 are Extracellular-facing; sequence TTSRRGHYHDVVEKYIRCLFINASNPSICEVDVSISSPAH. N-linked (GlcNAc...) asparagine glycosylation occurs at N328. The helical transmembrane segment at 347-367 threads the bilayer; that stretch reads FFFHFCMRLMGIEGLIFFGFT. The Cytoplasmic segment spans residues 368–440; that stretch reads RQTKRIWLRS…IELSGVDSKN (73 aa). The disordered stretch occupies residues 395–428; sequence ISSDEKTSNSSHRTTRGCRETEFGESIEQSNDPE.

This sequence belongs to the G-protein coupled receptor Fz/Smo family.

It is found in the membrane. This chain is Frizzled/smoothened-like sans CRD protein D (fscD), found in Dictyostelium discoideum (Social amoeba).